The following is a 1748-amino-acid chain: Flagellar attachment zone protein 1 (1748 aa).

3 coiled-coil regions span residues 613–657 (REQE…KLQK), 684–864 (VTLD…HKVR), and 903–1663 (NDHM…SALE). 41 repeat units span residues 1012–1025 (EELE…EKLA), 1026–1039 (EELE…EKLA), 1040–1053 (EELE…EKLA), 1054–1067 (EALD…EKLA), 1068–1081 (EELE…EKLA), 1082–1095 (EELE…EKLA), 1096–1109 (EELE…EKLA), 1110–1123 (EELE…EKLA), 1124–1137 (EELE…EKLA), 1138–1151 (EELE…EKLA), 1152–1165 (EALD…EKLA), 1166–1179 (EELD…EKLA), 1180–1193 (EELE…EKLA), 1194–1207 (EELE…EKLA), 1208–1221 (EELE…EKLA), 1222–1235 (EELE…EKLA), 1236–1249 (EELE…EKLA), 1250–1263 (EELE…EKLA), 1264–1277 (EELE…EKLA), 1278–1291 (EELE…EKLA), 1292–1305 (EELE…EKLA), 1306–1319 (EELE…EKLA), 1320–1333 (EELE…EKLA), 1334–1347 (EELE…EKLA), 1348–1361 (EELE…EKLA), 1362–1375 (EELE…EKLA), 1376–1389 (EELE…EKLA), 1390–1403 (EELE…EKLA), 1404–1417 (EELE…EKLA), 1418–1431 (EELE…EKLA), 1432–1445 (EELE…EKLA), 1446–1459 (EELE…EKLA), 1460–1473 (EELE…EKLA), 1474–1487 (EELE…EKLA), 1488–1501 (EELE…EKLA), 1502–1515 (EELE…EKLA), 1516–1529 (EELE…EKLA), 1530–1543 (EELE…EKLA), 1544–1557 (EELE…EKLA), 1558–1571 (EELE…EKLA), and 1572–1585 (EELE…KRLA). Residues 1012-1529 (EELELKAAEN…LKAAENEKLA (518 aa)) form a 41 X 14 AA tandem repeats of E-E-L-E-L-K-[VA]-A-E-N-E-K-L-A region.

Its subcellular location is the cell projection. It localises to the cilium. It is found in the flagellum. Its function is as follows. A component of FAZ filament that is required for correct FAZ assembly and attachment. Not essential for new flagellum growth. The sequence is that of Flagellar attachment zone protein 1 from Trypanosoma brucei gambiense (strain MHOM/CI/86/DAL972).